We begin with the raw amino-acid sequence, 327 residues long: Succinylglutamate desuccinylase (327 aa).

The Zn(2+) site is built by His53, Glu56, and His146. The active site involves Glu209.

It belongs to the AspA/AstE family. Succinylglutamate desuccinylase subfamily. Requires Zn(2+) as cofactor.

The enzyme catalyses N-succinyl-L-glutamate + H2O = L-glutamate + succinate. It functions in the pathway amino-acid degradation; L-arginine degradation via AST pathway; L-glutamate and succinate from L-arginine: step 5/5. Transforms N(2)-succinylglutamate into succinate and glutamate. The protein is Succinylglutamate desuccinylase of Serratia proteamaculans (strain 568).